A 259-amino-acid polypeptide reads, in one-letter code: UPF0246 protein PSPTO_1244 (259 aa).

Belongs to the UPF0246 family.

In Pseudomonas syringae pv. tomato (strain ATCC BAA-871 / DC3000), this protein is UPF0246 protein PSPTO_1244.